The following is a 405-amino-acid chain: Argininosuccinate synthase (405 aa).

ATP contacts are provided by residues Ala-13–Ser-21 and Ala-40. Residues Tyr-91 and Ser-96 each coordinate L-citrulline. An ATP-binding site is contributed by Gly-121. Residues Thr-123, Asn-127, and Asp-128 each contribute to the L-aspartate site. L-citrulline is bound at residue Asn-127. Positions 131, 182, 191, 267, and 279 each coordinate L-citrulline.

This sequence belongs to the argininosuccinate synthase family. Type 1 subfamily. Homotetramer.

It is found in the cytoplasm. It catalyses the reaction L-citrulline + L-aspartate + ATP = 2-(N(omega)-L-arginino)succinate + AMP + diphosphate + H(+). The protein operates within amino-acid biosynthesis; L-arginine biosynthesis; L-arginine from L-ornithine and carbamoyl phosphate: step 2/3. This is Argininosuccinate synthase from Rhizobium meliloti (strain 1021) (Ensifer meliloti).